Here is a 416-residue protein sequence, read N- to C-terminus: Serine protease hepsin (416 aa).

Over 1-18 (MAKEGGRTAPCCSRPKVA) the chain is Cytoplasmic. Residues 19–39 (ALTVGTLLFLTGIGAASWAIV) form a helical; Signal-anchor for type II membrane protein membrane-spanning segment. The Extracellular portion of the chain corresponds to 40–416 (TILLRSDQEP…SEATGMVTQP (377 aa)). One can recognise an SRCR domain in the interval 53–150 (VQLSPGDSRL…RGRFLTATCQ (98 aa)). 8 disulfide bridges follow: Cys76/Cys139, Cys89/Cys149, Cys118/Cys137, Cys152/Cys276, Cys187/Cys203, Cys290/Cys358, Cys321/Cys337, and Cys348/Cys380. An N-linked (GlcNAc...) asparagine glycan is attached at Asn111. A Peptidase S1 domain is found at 162-404 (IVGGQDSSLG…FREWIFQAIK (243 aa)). Active-site charge relay system residues include His202 and Asp256. Ser352 acts as the Charge relay system in catalysis.

It belongs to the peptidase S1 family. As to expression, widely expressed. Present in brain, heart, kidney, liver, stomach, muscle, lung, testis, skin and eye. Not expressed in ovary and thynus. In inner ear tissues, expressed in stria vascularis, modiolus, organ of Corti and spiral ganglion.

Its subcellular location is the cell membrane. The protein localises to the apical cell membrane. The catalysed reaction is Cleavage after basic amino-acid residues, with Arg strongly preferred to Lys.. Its function is as follows. Serine protease that cleaves extracellular substrates, and contributes to the proteolytic processing of growth factors, such as HGF and MST1/HGFL. Plays a role in cell growth and maintenance of cell morphology. Plays a role in the proteolytic processing of ACE2. Mediates the proteolytic cleavage of urinary UMOD that is required for UMOD polymerization. This Rattus norvegicus (Rat) protein is Serine protease hepsin (Hpn).